The chain runs to 335 residues: Zinc-type alcohol dehydrogenase-like protein SAS2087 (335 aa).

This sequence belongs to the zinc-containing alcohol dehydrogenase family. Quinone oxidoreductase subfamily.

This chain is Zinc-type alcohol dehydrogenase-like protein SAS2087, found in Staphylococcus aureus (strain MSSA476).